Consider the following 75-residue polypeptide: Small ribosomal subunit protein bS18 (75 aa).

The protein belongs to the bacterial ribosomal protein bS18 family. In terms of assembly, part of the 30S ribosomal subunit. Forms a tight heterodimer with protein bS6.

Binds as a heterodimer with protein bS6 to the central domain of the 16S rRNA, where it helps stabilize the platform of the 30S subunit. This Vibrio atlanticus (strain LGP32) (Vibrio splendidus (strain Mel32)) protein is Small ribosomal subunit protein bS18.